The chain runs to 191 residues: Cell division protein SepF (191 aa).

A compositionally biased stretch (polar residues) spans 153-178 (FPEEASPSNVSSKKTSQYKFETNTTP). The disordered stretch occupies residues 153-191 (FPEEASPSNVSSKKTSQYKFETNTTPEPAWGESKLSAYN).

It belongs to the SepF family. In terms of assembly, homodimer. Interacts with FtsZ.

Its subcellular location is the cytoplasm. Functionally, cell division protein that is part of the divisome complex and is recruited early to the Z-ring. Probably stimulates Z-ring formation, perhaps through the cross-linking of FtsZ protofilaments. Its function overlaps with FtsA. The polypeptide is Cell division protein SepF (Prochlorococcus marinus subsp. pastoris (strain CCMP1986 / NIES-2087 / MED4)).